Reading from the N-terminus, the 457-residue chain is Autophagy-related protein 14 (457 aa).

Positions 31–109 form a coiled coil; sequence RIENVMALIE…TRRAALSRRK (79 aa). Disordered regions lie at residues 54-73, 252-274, and 433-457; these read ETNAPTKDRKDALQAQQRTA, PSQASVSSPSSTTDTESQRVSRP, and NKNLLMGDKSSPRRGTSGWMRVKNR. Residues 253–266 show a composition bias toward low complexity; the sequence is SQASVSSPSSTTDT.

The protein belongs to the ATG14 family. Component of the autophagy-specific VPS34 PI3-kinase complex I.

It localises to the preautophagosomal structure membrane. Its subcellular location is the vacuole membrane. Its function is as follows. Required for cytoplasm to vacuole transport (Cvt) and autophagy as a part of the autophagy-specific VPS34 PI3-kinase complex I. This complex is essential to recruit the ATG8-phosphatidylinositol conjugate and the ATG12-ATG5 conjugate to the pre-autophagosomal structure. ATG14 mediates the specific binding of the VPS34 PI3-kinase complex I to the preautophagosomal structure (PAS). Autophagy is required for proper vegetative growth, asexual/sexual reproduction, and full virulence. Autophagy is particularly involved in the biosynthesis of deoxynivalenol (DON), an important virulence determinant. In Gibberella zeae (strain ATCC MYA-4620 / CBS 123657 / FGSC 9075 / NRRL 31084 / PH-1) (Wheat head blight fungus), this protein is Autophagy-related protein 14.